The primary structure comprises 183 residues: Streptavidin-V2 (183 aa).

The signal sequence occupies residues 1–24 (MRKIVVAAIAVSLTTVGITASASA). The Avidin-like domain maps to 37 to 159 (AEAGITGTWY…GHDTFTKVKP (123 aa)). Biotin-binding residues include Tyr67 and Tyr78. A Cell attachment site; atypical motif is present at residues 83–85 (RYD). Residues Trp116, Trp132, and Trp144 each coordinate biotin.

Belongs to the avidin/streptavidin family. Homotetramer.

It localises to the secreted. Functionally, the biological function of streptavidin is not known. Forms a strong non-covalent specific complex with biotin (one molecule of biotin per subunit of streptavidin). This Streptomyces violaceus (Streptomyces venezuelae) protein is Streptavidin-V2.